The sequence spans 202 residues: Small ribosomal subunit protein uS4 (202 aa).

The interval 15–42 (LGDLPGLTRKAAKRSYPPGQHGQARRKR) is disordered. The S4 RNA-binding domain occupies 90-152 (NRLDNVCFRI…KCSKLLAEAN (63 aa)).

It belongs to the universal ribosomal protein uS4 family. In terms of assembly, part of the 30S ribosomal subunit. Contacts protein S5. The interaction surface between S4 and S5 is involved in control of translational fidelity.

In terms of biological role, one of the primary rRNA binding proteins, it binds directly to 16S rRNA where it nucleates assembly of the body of the 30S subunit. With S5 and S12 plays an important role in translational accuracy. This is Small ribosomal subunit protein uS4 from Synechococcus sp. (strain CC9311).